We begin with the raw amino-acid sequence, 231 residues long: Octanoyltransferase (231 aa).

Residues 49–224 (ADTPDEIWLL…ALQRLLPPVY (176 aa)) form the BPL/LPL catalytic domain. Residues 88 to 95 (RGGQITYH), 155 to 157 (ALG), and 168 to 170 (GLA) each bind substrate. The active-site Acyl-thioester intermediate is C186.

The protein belongs to the LipB family.

The protein localises to the cytoplasm. It carries out the reaction octanoyl-[ACP] + L-lysyl-[protein] = N(6)-octanoyl-L-lysyl-[protein] + holo-[ACP] + H(+). It functions in the pathway protein modification; protein lipoylation via endogenous pathway; protein N(6)-(lipoyl)lysine from octanoyl-[acyl-carrier-protein]: step 1/2. Functionally, catalyzes the transfer of endogenously produced octanoic acid from octanoyl-acyl-carrier-protein onto the lipoyl domains of lipoate-dependent enzymes. Lipoyl-ACP can also act as a substrate although octanoyl-ACP is likely to be the physiological substrate. The chain is Octanoyltransferase from Aromatoleum aromaticum (strain DSM 19018 / LMG 30748 / EbN1) (Azoarcus sp. (strain EbN1)).